Here is a 399-residue protein sequence, read N- to C-terminus: MAKEKFNRTKPHVNIGTIGHVDHGKTTLSAAISAVLSLKGLAEMKDYDNIDNAPEEKERGITIATSHIEYETENRHYAHVDCPGHADYVKNMITGAAQMDGAILVVSAADGPMPQTREHILLSRQVGVPHIVVFLNKQDMVDDQELLELVEMEVRELLSAYEFPGDDTPIVAGSALRALEEAKAGNVGEWGEKVLKLMAEVDAYIPTPERDTEKTFLMPVEDVFSIAGRGTVVTGRIERGVVKVGDEVEIVGIRATQKTTVTGVEMFRKELEKGEAGDNVGVLLRGTKKEEVERGMVLCKPGSITPHKKFEGEIYVLSKEEGGRHTPFFTNYRPQFYVRTTDVTGSITLPEGVEMVMPGDNVKITVELISPVALELGTKFAIREGGRTVGAGVVSNIIE.

Residues 10 to 209 enclose the tr-type G domain; the sequence is KPHVNIGTIG…EVDAYIPTPE (200 aa). Positions 19–26 are G1; that stretch reads GHVDHGKT. 19–26 contributes to the GTP binding site; it reads GHVDHGKT. Thr26 contacts Mg(2+). Residues 60 to 64 are G2; that stretch reads GITIA. Residues 81 to 84 form a G3 region; it reads DCPG. Residues 81–85 and 136–139 contribute to the GTP site; these read DCPGH and NKQD. Positions 136-139 are G4; sequence NKQD. The segment at 174–176 is G5; the sequence is SAL.

This sequence belongs to the TRAFAC class translation factor GTPase superfamily. Classic translation factor GTPase family. EF-Tu/EF-1A subfamily. Monomer.

The protein resides in the cytoplasm. It catalyses the reaction GTP + H2O = GDP + phosphate + H(+). Functionally, GTP hydrolase that promotes the GTP-dependent binding of aminoacyl-tRNA to the A-site of ribosomes during protein biosynthesis. The protein is Elongation factor Tu of Helicobacter pylori (strain Shi470).